The chain runs to 316 residues: Transaldolase (316 aa).

The active-site Schiff-base intermediate with substrate is K127.

This sequence belongs to the transaldolase family. Type 2 subfamily.

It localises to the cytoplasm. It carries out the reaction D-sedoheptulose 7-phosphate + D-glyceraldehyde 3-phosphate = D-erythrose 4-phosphate + beta-D-fructose 6-phosphate. It functions in the pathway carbohydrate degradation; pentose phosphate pathway; D-glyceraldehyde 3-phosphate and beta-D-fructose 6-phosphate from D-ribose 5-phosphate and D-xylulose 5-phosphate (non-oxidative stage): step 2/3. Transaldolase is important for the balance of metabolites in the pentose-phosphate pathway. This chain is Transaldolase (tal), found in Helicobacter pylori (strain ATCC 700392 / 26695) (Campylobacter pylori).